Reading from the N-terminus, the 149-residue chain is UPF0178 protein Cphy_3042 (149 aa).

Over residues 112–128 (QRRHGKQNLHSKNNKKR) the composition is skewed to basic residues. The tract at residues 112–132 (QRRHGKQNLHSKNNKKRTTGD) is disordered.

This sequence belongs to the UPF0178 family.

The chain is UPF0178 protein Cphy_3042 from Lachnoclostridium phytofermentans (strain ATCC 700394 / DSM 18823 / ISDg) (Clostridium phytofermentans).